The primary structure comprises 271 residues: Phosphoglycerate mutase-like protein (271 aa).

Histidine 22 (tele-phosphohistidine intermediate) is an active-site residue. Glutamate 134 (proton donor/acceptor) is an active-site residue. Positions 252–271 (SAETTNYPGKVPEGLDNPSG) are disordered.

The protein belongs to the phosphoglycerate mutase family. In terms of tissue distribution, expressed in the shoot apical meristem and meristematic zone of the root tips.

In terms of biological role, may play a role in carbohydrates metabolism. The polypeptide is Phosphoglycerate mutase-like protein (Arabidopsis thaliana (Mouse-ear cress)).